Consider the following 538-residue polypeptide: Probable inorganic phosphate transporter 1-4 (538 aa).

The Cytoplasmic portion of the chain corresponds to 1 to 23 (MAGELKVLNALDSAKTQWYHFTA). Residues 24 to 44 (IVIAGMGFFTDAYDLFSISLV) form a helical membrane-spanning segment. Residues 45–69 (TKLLGRIYYFNPASKSPGSLPPNVS) lie on the Extracellular side of the membrane. The chain crosses the membrane as a helical span at residues 70 to 90 (AAVNGVAFCGTLAGQLFFGWL). The Cytoplasmic segment spans residues 91 to 98 (GDKMGRKK). Residues 99–119 (VYGMTLMLMVICCLASGLSFG) traverse the membrane as a helical segment. The Extracellular portion of the chain corresponds to 120–123 (SSAK). The chain crosses the membrane as a helical span at residues 124 to 144 (GVMATLCFFRFWLGFGIGGDY). The Cytoplasmic segment spans residues 145–163 (PLSATIMSEYANKRTRGAF). The chain crosses the membrane as a helical span at residues 164–184 (IAAVFAMQGFGNLTGGIVAII). Residues 185–210 (VSAAFKSRFDAPAYRDDRTGSTVPQA) lie on the Extracellular side of the membrane. The helical transmembrane segment at 211-231 (DYAWRIVLMFGAIPALLTYYW) threads the bilayer. Residues 232–294 (RMKMPETARY…RQFLRRHGRH (63 aa)) lie on the Cytoplasmic side of the membrane. A helical transmembrane segment spans residues 295 to 315 (LLGTTVCWFVLDIAFYSSNLF). Topologically, residues 316-346 (QKDIYTAVQWLPKADTMSALEEMFKISRAQT) are extracellular. The chain crosses the membrane as a helical span at residues 347–367 (LVALCGTIPGYWFTVFFIDII). The Cytoplasmic segment spans residues 368–369 (GR). The chain crosses the membrane as a helical span at residues 370 to 390 (FVIQLGGFFFMTAFMLGLAVP). The Extracellular portion of the chain corresponds to 391-396 (YHHWTT). The helical transmembrane segment at 397 to 417 (PGNHIGFVVMYAFTFFFANFG) threads the bilayer. At 418 to 440 (PNSTTFIVPAEIFPARLRSTCHG) the chain is on the cytoplasmic side. A helical transmembrane segment spans residues 441–461 (ISAAAGKAGAIVGSFGFLYAA). Over 462–481 (QSTDASKTDAGYPPGIGVRN) the chain is Extracellular. A helical transmembrane segment spans residues 482–502 (SLFFLAGCNVIGFFFTFLVPE). Residues 503 to 538 (SKGKSLEELSGENEDDDDVPEAPATADHRTAPAPPA) are Cytoplasmic-facing. The disordered stretch occupies residues 507 to 538 (SLEELSGENEDDDDVPEAPATADHRTAPAPPA). Residues 511 to 522 (LSGENEDDDDVP) are compositionally biased toward acidic residues.

Belongs to the major facilitator superfamily. Phosphate:H(+) symporter (TC 2.A.1.9) family. In terms of tissue distribution, expressed at low levels in roots.

The protein localises to the membrane. In terms of biological role, high-affinity transporter for external inorganic phosphate. This is Probable inorganic phosphate transporter 1-4 (PHT1-4) from Oryza sativa subsp. japonica (Rice).